The sequence spans 291 residues: 3-hydroxy-5-phosphonooxypentane-2,4-dione thiolase (291 aa).

The active-site Schiff-base intermediate with substrate is lysine 203.

This sequence belongs to the DeoC/FbaB aldolase family. As to quaternary structure, homodecamer.

The protein localises to the cytoplasm. It carries out the reaction dihydroxyacetone phosphate + acetyl-CoA = 3-hydroxy-2,4-dioxopentyl phosphate + CoA. In terms of biological role, involved in the degradation of phospho-AI-2, thereby terminating induction of the lsr operon and closing the AI-2 signaling cycle. Catalyzes the transfer of an acetyl moiety from 3-hydroxy-5-phosphonooxypentane-2,4-dione to CoA to form glycerone phosphate and acetyl-CoA. The protein is 3-hydroxy-5-phosphonooxypentane-2,4-dione thiolase of Escherichia coli O139:H28 (strain E24377A / ETEC).